The chain runs to 337 residues: Nodulation protein D 2 (337 aa).

The HTH lysR-type domain occupies 6 to 63 (LDLNLLVVLDSLMTARNLTAAARSINLSQPAMSAAVARLRAYFGDELFTMRGRTLVPT). A DNA-binding region (H-T-H motif) is located at residues 23–42 (LTAAARSINLSQPAMSAAVA).

It belongs to the LysR transcriptional regulatory family.

Functionally, nodD regulates the expression of the nodABCFE genes which encode other nodulation proteins. NodD is also a negative regulator of its own expression. Binds flavonoids as inducers. This is Nodulation protein D 2 (nodD2) from Bradyrhizobium sp. (strain NC92).